Consider the following 428-residue polypeptide: Adenylosuccinate synthetase (428 aa).

GTP is bound by residues G12–K18 and G40–T42. The active-site Proton acceptor is D13. Mg(2+)-binding residues include D13 and G40. IMP is bound by residues D13–K16, N38–H41, T130, R144, Q224, T239, and R303. Residue H41 is the Proton donor of the active site. V299–R305 provides a ligand contact to substrate. GTP contacts are provided by residues R305, K331–D333, and G413–G415.

The protein belongs to the adenylosuccinate synthetase family. Homodimer. Mg(2+) serves as cofactor.

The protein localises to the cytoplasm. It catalyses the reaction IMP + L-aspartate + GTP = N(6)-(1,2-dicarboxyethyl)-AMP + GDP + phosphate + 2 H(+). It functions in the pathway purine metabolism; AMP biosynthesis via de novo pathway; AMP from IMP: step 1/2. In terms of biological role, plays an important role in the de novo pathway of purine nucleotide biosynthesis. Catalyzes the first committed step in the biosynthesis of AMP from IMP. The chain is Adenylosuccinate synthetase from Clostridium perfringens (strain 13 / Type A).